A 394-amino-acid chain; its full sequence is Elongation factor Tu (394 aa).

A tr-type G domain is found at 10-204 (KPHVNVGTIG…ALDSYIPEPE (195 aa)). The segment at 19–26 (GHVDHGKT) is G1. 19-26 (GHVDHGKT) contributes to the GTP binding site. A Mg(2+)-binding site is contributed by Thr26. The interval 60-64 (GITIA) is G2. Positions 81–84 (DCPG) are G3. GTP-binding positions include 81–85 (DCPGH) and 136–139 (NKCD). The interval 136–139 (NKCD) is G4. Residues 174–176 (SAL) form a G5 region.

Belongs to the TRAFAC class translation factor GTPase superfamily. Classic translation factor GTPase family. EF-Tu/EF-1A subfamily. As to quaternary structure, monomer.

The protein resides in the cytoplasm. The enzyme catalyses GTP + H2O = GDP + phosphate + H(+). Its function is as follows. GTP hydrolase that promotes the GTP-dependent binding of aminoacyl-tRNA to the A-site of ribosomes during protein biosynthesis. The chain is Elongation factor Tu from Vibrio campbellii (strain ATCC BAA-1116).